The chain runs to 552 residues: Glutamine--tRNA ligase (552 aa).

The 'HIGH' region signature appears at 34–44 (PEPNGYLHIGH). ATP is bound by residues 35-37 (EPN) and 41-47 (HIGHAKS). D67 and Y212 together coordinate L-glutamine. Residues T231, 261–262 (RL), and 269–271 (MSK) contribute to the ATP site. Positions 268-272 (VMSKR) match the 'KMSKS' region motif.

Belongs to the class-I aminoacyl-tRNA synthetase family. In terms of assembly, monomer.

The protein localises to the cytoplasm. It catalyses the reaction tRNA(Gln) + L-glutamine + ATP = L-glutaminyl-tRNA(Gln) + AMP + diphosphate. This is Glutamine--tRNA ligase from Aliivibrio fischeri (strain MJ11) (Vibrio fischeri).